Reading from the N-terminus, the 131-residue chain is Small ribosomal subunit protein bS6 (131 aa).

Positions 97 to 131 (TEASPMAKARDERDSRRGPAGERSYDEAHAEEIAE) are disordered. The segment covering 104–131 (KARDERDSRRGPAGERSYDEAHAEEIAE) has biased composition (basic and acidic residues).

It belongs to the bacterial ribosomal protein bS6 family.

Binds together with bS18 to 16S ribosomal RNA. The sequence is that of Small ribosomal subunit protein bS6 from Shewanella baltica (strain OS223).